A 461-amino-acid polypeptide reads, in one-letter code: tRNA modification GTPase MnmE (461 aa).

The (6S)-5-formyl-5,6,7,8-tetrahydrofolate site is built by R23, E88, and R127. The TrmE-type G domain maps to 223 to 382; it reads GLNTVIVGKP…VEEALVEIVY (160 aa). Residue N233 participates in K(+) binding. GTP-binding positions include 233-238, 252-258, and 277-280; these read NVGKSS, TEVPGTT, and DTAG. S237 is a binding site for Mg(2+). K(+)-binding residues include T252, V254, and T257. Position 258 (T258) interacts with Mg(2+). K461 contacts (6S)-5-formyl-5,6,7,8-tetrahydrofolate.

Belongs to the TRAFAC class TrmE-Era-EngA-EngB-Septin-like GTPase superfamily. TrmE GTPase family. As to quaternary structure, homodimer. Heterotetramer of two MnmE and two MnmG subunits. It depends on K(+) as a cofactor.

The protein resides in the cytoplasm. In terms of biological role, exhibits a very high intrinsic GTPase hydrolysis rate. Involved in the addition of a carboxymethylaminomethyl (cmnm) group at the wobble position (U34) of certain tRNAs, forming tRNA-cmnm(5)s(2)U34. The sequence is that of tRNA modification GTPase MnmE from Alkaliphilus metalliredigens (strain QYMF).